We begin with the raw amino-acid sequence, 557 residues long: Alpha-barbatene synthase (557 aa).

Residues arginine 273, aspartate 310, aspartate 314, arginine 451, and aspartate 454 each coordinate (2E,6E)-farnesyl diphosphate. Mg(2+)-binding residues include aspartate 310 and aspartate 314. Positions 310-314 match the DDXXD motif motif; the sequence is DDACD. Mg(2+)-binding residues include aspartate 454, aspartate 455, and aspartate 462.

It belongs to the terpene synthase family. Tpsa subfamily. In terms of assembly, monomer. Requires Mg(2+) as cofactor. It depends on Mn(2+) as a cofactor. Expressed exclusively in flowers. Expressed in intrafloral nectaries and in the funiculus within the ovules.

Its subcellular location is the cytoplasm. The enzyme catalyses (2E,6E)-farnesyl diphosphate = (+)-alpha-barbatene + diphosphate. The catalysed reaction is (2E,6E)-farnesyl diphosphate = (+)-thujopsene + diphosphate. It catalyses the reaction (2E,6E)-farnesyl diphosphate = (+)-beta-chamigrene + diphosphate. It carries out the reaction (2E,6E)-farnesyl diphosphate = (+)-beta-barbatene + diphosphate. The enzyme catalyses (2E,6E)-farnesyl diphosphate = beta-sesquiphellandrene + diphosphate. The catalysed reaction is (2E,6E)-farnesyl diphosphate = (S)-beta-bisabolene + diphosphate. It catalyses the reaction (2E,6E)-farnesyl diphosphate = (-)-alpha-cuprenene + diphosphate. It carries out the reaction (2E,6E)-farnesyl diphosphate = alpha-zingiberene + diphosphate. The enzyme catalyses (2E,6E)-farnesyl diphosphate = beta-acoradiene + diphosphate. The catalysed reaction is (2E,6E)-farnesyl diphosphate = (E)-beta-farnesene + diphosphate. It participates in secondary metabolite biosynthesis; terpenoid biosynthesis. In terms of biological role, involved in the biosynthesis of over 15 sesquiterpenes (C15). The major products are (+)-alpha-barbatene (27.3%), (+)-thujopsene (17.8%) and (+)-beta-chamigrene (9.9%). Can use farnesyl diphosphate or geranyl diphosphate as substrates, but not geranylgeranyl diphosphate. The protein is Alpha-barbatene synthase of Arabidopsis thaliana (Mouse-ear cress).